The primary structure comprises 104 residues: Transcription elongation factor A protein-like 9 (104 aa).

Positions 1–27 (MKSCQKMEGKPENESEPKHEEEPKPEE) are enriched in basic and acidic residues. The segment at 1 to 44 (MKSCQKMEGKPENESEPKHEEEPKPEEKPEEEEKLEEEAKAKGT) is disordered.

It belongs to the TFS-II family. TFA subfamily.

Its subcellular location is the nucleus. In terms of biological role, may be involved in transcriptional regulation. The sequence is that of Transcription elongation factor A protein-like 9 from Homo sapiens (Human).